The chain runs to 488 residues: Protein nucleotidyltransferase YdiU (488 aa).

8 residues coordinate ATP: glycine 91, glycine 93, arginine 94, lysine 114, aspartate 126, glycine 127, arginine 177, and arginine 184. A disordered region spans residues 108-127; sequence RFDIQLKGSGPTPYSRRGDG. Catalysis depends on aspartate 253, which acts as the Proton acceptor. Residues asparagine 254 and aspartate 263 each coordinate Mg(2+). Aspartate 263 is an ATP binding site.

This sequence belongs to the SELO family. The cofactor is Mg(2+). Mn(2+) serves as cofactor.

The enzyme catalyses L-seryl-[protein] + ATP = 3-O-(5'-adenylyl)-L-seryl-[protein] + diphosphate. It carries out the reaction L-threonyl-[protein] + ATP = 3-O-(5'-adenylyl)-L-threonyl-[protein] + diphosphate. It catalyses the reaction L-tyrosyl-[protein] + ATP = O-(5'-adenylyl)-L-tyrosyl-[protein] + diphosphate. The catalysed reaction is L-histidyl-[protein] + UTP = N(tele)-(5'-uridylyl)-L-histidyl-[protein] + diphosphate. The enzyme catalyses L-seryl-[protein] + UTP = O-(5'-uridylyl)-L-seryl-[protein] + diphosphate. It carries out the reaction L-tyrosyl-[protein] + UTP = O-(5'-uridylyl)-L-tyrosyl-[protein] + diphosphate. Its function is as follows. Nucleotidyltransferase involved in the post-translational modification of proteins. It can catalyze the addition of adenosine monophosphate (AMP) or uridine monophosphate (UMP) to a protein, resulting in modifications known as AMPylation and UMPylation. The protein is Protein nucleotidyltransferase YdiU of Bacillus cereus (strain AH820).